A 476-amino-acid chain; its full sequence is Serine protease HTRA1B (476 aa).

The signal sequence occupies residues 1–19 (MRLLILCASIILVPLLCDA). The region spanning 25–109 (YVIGCPERCD…RGKTGVCVCK (85 aa)) is the IGFBP N-terminal domain. Cystine bridges form between Cys29–Cys54, Cys33–Cys56, Cys38–Cys57, Cys45–Cys60, Cys68–Cys85, and Cys79–Cys106. The Kazal-like domain occupies 94-153 (TTTVRRRGKTGVCVCKSSEPVCGSDGVSYRNICELKRVSNRAQKLQQPPIIFIQRGACGK). A serine protease region spans residues 200–360 (GSGFVVSEDG…IPSDKIRQFL (161 aa)). Catalysis depends on charge relay system residues His216, Asp246, and Ser324. Residues 361 to 463 (AESHDRQAKG…LRAVVRRGNE (103 aa)) form the PDZ domain.

Belongs to the peptidase S1C family. In terms of assembly, forms homotrimers. In the presence of substrate, may form higher-order multimers in a PDZ-independent manner.

The protein localises to the secreted. The protein resides in the cytoplasm. It localises to the cytosol. Its function is as follows. Serine protease with a variety of targets, including extracellular matrix proteins and proteoglycans. Through cleavage of proteoglycans, may release soluble FGF-glycosaminoglycan complexes that promote the range and intensity of FGF signals in the extracellular space. Regulates the availability of insulin-like growth factors (IGFs) by cleaving IGF-binding proteins. Inhibits signaling mediated by TGF-beta family members. Consequently, may regulate many physiological processes. Intracellularly, degrades TSC2, leading to the activation of TSC2 downstream targets. This Danio rerio (Zebrafish) protein is Serine protease HTRA1B (htra1b).